Reading from the N-terminus, the 299-residue chain is Maintenance of mitochondrial morphology protein 1 (299 aa).

Residues 1-15 (MTNIIFSLQPTFTQG) are Lumenal-facing. Residues 16–36 (LILGQLSVLVLLGLILKYLFL) form a helical membrane-spanning segment. Residues 37–299 (DSTKNPFETT…QEESKRQEEA (263 aa)) are Cytoplasmic-facing. The interval 47–68 (SYHPQFDRKPARKQQAQDSQSQ) is disordered. The 209-residue stretch at 73 to 281 (DVESLDWFNL…LPGLASVAEA (209 aa)) folds into the SMP-LTD domain.

It belongs to the MMM1 family. In terms of assembly, homodimer. Component of the ER-mitochondria encounter structure (ERMES) or MDM complex, composed of MMM1, MDM10, MDM12 and MDM34. An MMM1 homodimer associates with one molecule of MDM12 on each side in a pairwise head-to-tail manner, and the SMP-LTD domains of MMM1 and MDM12 generate a continuous hydrophobic tunnel for phospholipid trafficking.

Its subcellular location is the endoplasmic reticulum membrane. Functionally, component of the ERMES/MDM complex, which serves as a molecular tether to connect the endoplasmic reticulum (ER) and mitochondria. Components of this complex are involved in the control of mitochondrial shape and protein biogenesis, and function in nonvesicular lipid trafficking between the ER and mitochondria. The MDM12-MMM1 subcomplex functions in the major beta-barrel assembly pathway that is responsible for biogenesis of all outer membrane beta-barrel proteins, and acts in a late step after the SAM complex. The MDM10-MDM12-MMM1 subcomplex further acts in the TOM40-specific pathway after the action of the MDM12-MMM1 complex. Essential for establishing and maintaining the structure of mitochondria and maintenance of mtDNA nucleoids. This is Maintenance of mitochondrial morphology protein 1 from Coprinopsis cinerea (strain Okayama-7 / 130 / ATCC MYA-4618 / FGSC 9003) (Inky cap fungus).